The following is a 294-amino-acid chain: uncharacterized protein (294 aa).

Active-site charge relay system residues include threonine 43 and tyrosine 104. Tyrosine 130 (proton donor) is an active-site residue. Lysine 158 acts as the Schiff-base intermediate with substrate in catalysis.

It belongs to the DapA family. In terms of assembly, homotetramer.

The protein localises to the cytoplasm. This is an uncharacterized protein from Pyrococcus abyssi (strain GE5 / Orsay).